The chain runs to 733 residues: Tyrosine-protein kinase ptk (733 aa).

2 helical membrane-spanning segments follow: residues 19-39 (LFFS…LSLI) and 438-458 (LQIL…LALL). An ATP-binding site is contributed by 542-550 (GPAPEVGKS).

It belongs to the etk/wzc family. The cofactor is Mg(2+). Mn(2+) is required as a cofactor. Post-translationally, autophosphorylated on several Tyr residues. Dephosphorylated by ptp.

The protein resides in the cell inner membrane. The catalysed reaction is L-tyrosyl-[protein] + ATP = O-phospho-L-tyrosyl-[protein] + ADP + H(+). It participates in glycan metabolism; exopolysaccharide biosynthesis. May be involved in the production and the transport of exopolysaccharides. This Acinetobacter johnsonii protein is Tyrosine-protein kinase ptk (ptk).